The following is a 104-amino-acid chain: Large ribosomal subunit protein uL24 (104 aa).

Belongs to the universal ribosomal protein uL24 family. Part of the 50S ribosomal subunit.

Its function is as follows. One of two assembly initiator proteins, it binds directly to the 5'-end of the 23S rRNA, where it nucleates assembly of the 50S subunit. Functionally, one of the proteins that surrounds the polypeptide exit tunnel on the outside of the subunit. This chain is Large ribosomal subunit protein uL24, found in Pseudomonas syringae pv. syringae (strain B728a).